The sequence spans 99 residues: UPF0213 protein spr1390 (99 aa).

The GIY-YIG domain occupies 3–78 (HKAYMYVLEC…KRKKRPQKEE (76 aa)).

Belongs to the UPF0213 family.

The polypeptide is UPF0213 protein spr1390 (Streptococcus pneumoniae (strain ATCC BAA-255 / R6)).